We begin with the raw amino-acid sequence, 1353 residues long: Adenylate cyclase type 9 (1353 aa).

Disordered regions lie at residues 1–27 (MASPPHQQLLHHHSTEVSCDSSGDSNS) and 49–71 (SISSSCSSSGDSGGVPRRVGGGG). Over 1–117 (MASPPHQQLL…CFPQTQRRFR (117 aa)) the chain is Cytoplasmic. A compositionally biased stretch (polar residues) spans 16 to 27 (EVSCDSSGDSNS). Over residues 49–66 (SISSSCSSSGDSGGVPRR) the composition is skewed to low complexity. A helical transmembrane segment spans residues 118–138 (YALFYIGFACLLWSIYFAVHM). At 139–141 (RSR) the chain is on the extracellular side. A helical membrane pass occupies residues 142–162 (LIVMVAPALCFLLVCVGFFLF). The Cytoplasmic portion of the chain corresponds to 163–171 (TFTKLYARH). A helical membrane pass occupies residues 172–192 (YAWTSLALTLLVFALTLAAQF). The Extracellular segment spans residues 193 to 215 (QVLTPVSGRGDSSNLTATARPTD). Residue Asn206 is glycosylated (N-linked (GlcNAc...) asparagine). A helical transmembrane segment spans residues 216–235 (TCLSQVGSFSMCIEVLFLLY). At 236–241 (TVMHLP) the chain is on the cytoplasmic side. A helical membrane pass occupies residues 242–259 (LYLSLCLGVAYSVLFETF). Over 260–280 (GYHFRDEACFPSPGAGALHWE) the chain is Extracellular. Residues 281-301 (LLSRGLLHGCIHAIGVHLFVM) traverse the membrane as a helical segment. The Cytoplasmic portion of the chain corresponds to 302-786 (SQVRSRSTFL…VKTFASPTFS (485 aa)). The tract at residues 349–375 (QGDEESENSVKRHATSSPKNRKKKSSI) is disordered. Over residues 359-374 (KRHATSSPKNRKKKSS) the composition is skewed to basic residues. The Guanylate cyclase 1 domain occupies 394–521 (SILFADIVGF…NDVNLANLME (128 aa)). Mg(2+) is bound by residues Asp399, Ile400, and Asp443. Residues 399–404 (DIVGFT), 441–443 (LGD), and Arg487 each bind ATP. At Ser610 the chain carries Phosphoserine. The interval 642–684 (EAGAEGGAPQNGCQDEHKNSTKASGGPNPKTQNGLLSPPQEEK) is disordered. Phosphoserine occurs at positions 688, 691, and 706. Residues 787–807 (SLLDVFLSTTVFLTLSTTCFL) form a helical membrane-spanning segment. Topologically, residues 808-818 (KYEAATVPPPP) are extracellular. A helical membrane pass occupies residues 819 to 839 (AALAVFSAALLLEVLSLAVSI). The Cytoplasmic segment spans residues 840–867 (RMVFFLEDVMACTKRLLEWIAGWLPRHC). The chain crosses the membrane as a helical span at residues 868–888 (IGAILVSLPALAVYSHVTSEY). The Extracellular portion of the chain corresponds to 889-891 (ETN). Residues 892–912 (IHFPVFTGSAALIAVVHYCNF) form a helical membrane-spanning segment. The Cytoplasmic portion of the chain corresponds to 913 to 920 (CQLSSWMR). Residues 921-941 (SSLATVVGAGPLLLLYVSLCP) traverse the membrane as a helical segment. The Extracellular portion of the chain corresponds to 942–975 (DSSVLTSPLDAVQNFSSERNPCNSSVPRDLRRPA). N-linked (GlcNAc...) asparagine glycosylation is found at Asn955 and Asn964. A helical transmembrane segment spans residues 976-996 (SLIGQEVVLVFFLLLLLVWFL). The Cytoplasmic portion of the chain corresponds to 997–1353 (NREFEVSYRL…LTKLNVSKSV (357 aa)). Residues 1058–1198 (GVIFASIVNF…DTVNIASRMD (141 aa)) form the Guanylate cyclase 2 domain. ATP contacts are provided by residues Lys1108, 1185-1187 (DIW), 1192-1196 (NIASR), and Lys1232. Phosphoserine occurs at positions 1257, 1259, 1295, and 1307. The span at 1292-1301 (SLGSDSSTQA) shows a compositional bias: polar residues. Residues 1292–1326 (SLGSDSSTQAKDAHLSPKRPWKEPVKAEERGRFGK) form a disordered region. A compositionally biased stretch (basic and acidic residues) spans 1302 to 1326 (KDAHLSPKRPWKEPVKAEERGRFGK).

It belongs to the adenylyl cyclase class-4/guanylyl cyclase family. Requires Mg(2+) as cofactor. It depends on Mn(2+) as a cofactor. Detected in skeletal muscle, pancreas, lung, heart, kidney, liver, brain and placenta. Expressed in multiple cells of the lung, with expression highest in airway smooth muscle.

It localises to the cell membrane. The catalysed reaction is ATP = 3',5'-cyclic AMP + diphosphate. Its activity is regulated as follows. Insensitive to calcium/calmodulin, forskolin and somatostatin. Stimulated by beta-adrenergic receptor activation. Activity is down-regulated by calcium/calcineurin. Its function is as follows. Adenylyl cyclase that catalyzes the formation of the signaling molecule cAMP in response to activation of G protein-coupled receptors. Contributes to signaling cascades activated by CRH (corticotropin-releasing factor), corticosteroids and beta-adrenergic receptors. In Homo sapiens (Human), this protein is Adenylate cyclase type 9 (ADCY9).